Here is a 710-residue protein sequence, read N- to C-terminus: multidrug resistance regulator 2 (710 aa).

The zn(2)-C6 fungal-type DNA-binding region spans 11–37 (CDACRSRKIKCNRQTPCASCHKSKRDC). The next 2 helical transmembrane spans lie at 475–495 (DLVIFSVNFLLVYMYYSLYLF) and 525–545 (LFLAYFNLNYIHLVLMITNFL).

The protein resides in the nucleus. Its subcellular location is the membrane. Its function is as follows. Transcription factor that controls the expression of CDR1, the major multidrug efflux pump. Required for yeast cell adherence to silicone substrate and plays a role in virulence. The sequence is that of multidrug resistance regulator 2 from Candida albicans (strain SC5314 / ATCC MYA-2876) (Yeast).